A 390-amino-acid polypeptide reads, in one-letter code: Zinc finger CCCH domain-containing protein 46 (390 aa).

The segment at S2 to P29 adopts a C3H1-type zinc-finger fold. The disordered stretch occupies residues A27 to Q129. The segment covering G48–F76 has biased composition (low complexity). A compositionally biased stretch (polar residues) spans P106–Q129. The tract at residues W146–P211 is required for transcriptional activation activity. The segment covering S230–Q248 has biased composition (polar residues). Positions S230–T284 are disordered. Residues G250–A268 are compositionally biased toward low complexity.

Interacts with GSK1 and GSK4. Post-translationally, phosphorylated on serine and threonine residues by GSK1. Phosphorylation represses nuclear localization. As to expression, expressed in the adaxial face of the collar, nodes and the basal region of elongating internodes.

The protein resides in the nucleus. It localises to the cytoplasm. In terms of biological role, transcriptional activator that binds double-stranded DNA and the single-stranded RNA polymers poly(rA), poly(rU) and poly(rG), but not poly(rC). Mediates optimal plant architecture through brassinosteroid (BR) signaling. May act as a negative regulator in sterol homeostasis. Acts as a negative regulator of BR signaling. Binds to the specific DNA sequence 5'-CTCGC-3' of BZR1 promoter and negatively regulates BZR1. Acts as an antagonistic transcription factor of BZR1 to attenuate the BR signaling pathway and regulate leaf bending. Represses the expression of ILI1, and activates that of IBH1 to balance the regulation activity of BZR1. The protein is Zinc finger CCCH domain-containing protein 46 of Oryza sativa subsp. japonica (Rice).